A 1364-amino-acid chain; its full sequence is Serine protease EatA (1364 aa).

An N-terminal signal peptide occupies residues 1 to 56 (MNKVFSLKYSFLAKGFIAVSELARRVSVKGKLKSASSIIISPITIAIVSYAPPSLA). The Peptidase S6 domain occupies 57-307 (ATVNADISYQ…VVTTQDFLHQ (251 aa)). Catalysis depends on charge relay system residues His-134, Asp-162, and Ser-267. One can recognise an Autotransporter domain in the interval 1098–1364 (DSQGDAGGWA…SINANFRYYF (267 aa)).

Post-translationally, cleaved to release the mature protein from the outer membrane.

The protein resides in the periplasm. It localises to the secreted. The protein localises to the cell surface. It is found in the cell outer membrane. Inhibited by phenylmethylsulfonyl fluoride. In terms of biological role, autotransporter serine protease probably involved in virulence. The polypeptide is Serine protease EatA (eatA) (Escherichia coli O78:H11 (strain H10407 / ETEC)).